The primary structure comprises 474 residues: Protein CyaE (474 aa).

An N-terminal signal peptide occupies residues 1 to 31; it reads MAAVQVRRRGRALALALWAGFALSVGGGVRA.

This sequence belongs to the outer membrane factor (OMF) (TC 1.B.17) family.

The protein resides in the cell outer membrane. In terms of biological role, cyaE is necessary for transport of calmodulin-sensitive adenylate cyclase-hemolysin (cyclolysin). In Bordetella pertussis (strain Tohama I / ATCC BAA-589 / NCTC 13251), this protein is Protein CyaE (cyaE).